Consider the following 761-residue polypeptide: DNA topoisomerase 1 (761 aa).

The Toprim domain maps to 6 to 143 (TALIICEKPS…KRMRFSSLTK (138 aa)). Mg(2+)-binding residues include glutamate 12 and aspartate 111. Positions 157–569 (DYGLVDAGES…EAEKRLRKIL (413 aa)) constitute a Topo IA-type catalytic domain. The interval 196–201 (SVGRVQ) is interaction with DNA. Residue tyrosine 315 is the O-(5'-phospho-DNA)-tyrosine intermediate of the active site. C4-type zinc fingers lie at residues 600–626 (CPKCGGDLILIRHKKGRFVGCSNYPEC), 680–706 (CPKCGAKLILKKGVYGAFYGCSNYPKC), and 721–747 (CPKCGGDLVVREGKFGKFVGCSNYPKC).

It belongs to the type IA topoisomerase family. In terms of assembly, monomer. The cofactor is Mg(2+).

The enzyme catalyses ATP-independent breakage of single-stranded DNA, followed by passage and rejoining.. Its function is as follows. Releases the supercoiling and torsional tension of DNA, which is introduced during the DNA replication and transcription, by transiently cleaving and rejoining one strand of the DNA duplex. Introduces a single-strand break via transesterification at a target site in duplex DNA. The scissile phosphodiester is attacked by the catalytic tyrosine of the enzyme, resulting in the formation of a DNA-(5'-phosphotyrosyl)-enzyme intermediate and the expulsion of a 3'-OH DNA strand. The free DNA strand then undergoes passage around the unbroken strand, thus removing DNA supercoils. Finally, in the religation step, the DNA 3'-OH attacks the covalent intermediate to expel the active-site tyrosine and restore the DNA phosphodiester backbone. The polypeptide is DNA topoisomerase 1 (Methanocaldococcus jannaschii (strain ATCC 43067 / DSM 2661 / JAL-1 / JCM 10045 / NBRC 100440) (Methanococcus jannaschii)).